We begin with the raw amino-acid sequence, 179 residues long: Repressor of phase 1 flagellin gene (179 aa).

Transcriptional repressor of the FliC phase-1 flagellin. This Salmonella abortus-equi protein is Repressor of phase 1 flagellin gene (fljA).